The primary structure comprises 218 residues: Deoxyribose-phosphate aldolase (218 aa).

Asp-92 functions as the Proton donor/acceptor in the catalytic mechanism. The active-site Schiff-base intermediate with acetaldehyde is Lys-155. The active-site Proton donor/acceptor is Lys-184.

It belongs to the DeoC/FbaB aldolase family. DeoC type 1 subfamily.

The protein resides in the cytoplasm. The catalysed reaction is 2-deoxy-D-ribose 5-phosphate = D-glyceraldehyde 3-phosphate + acetaldehyde. It participates in carbohydrate degradation; 2-deoxy-D-ribose 1-phosphate degradation; D-glyceraldehyde 3-phosphate and acetaldehyde from 2-deoxy-alpha-D-ribose 1-phosphate: step 2/2. Functionally, catalyzes a reversible aldol reaction between acetaldehyde and D-glyceraldehyde 3-phosphate to generate 2-deoxy-D-ribose 5-phosphate. This is Deoxyribose-phosphate aldolase from Clostridium kluyveri (strain NBRC 12016).